A 304-amino-acid chain; its full sequence is GTPase Era (304 aa).

Residues 11–179 (YCGFIAIVGR…QKIVRKSLRE (169 aa)) form the Era-type G domain. The tract at residues 19–26 (GRPNVGKS) is G1. 19–26 (GRPNVGKS) lines the GTP pocket. Residues 45-49 (QTTRH) are G2. Residues 66-69 (DTPG) are G3. GTP-binding positions include 66 to 70 (DTPGL) and 128 to 131 (NKVD). The G4 stretch occupies residues 128-131 (NKVD). A G5 region spans residues 158–160 (ISA). The 78-residue stretch at 210-287 (TGEELPYSVT…HLELWVKVKA (78 aa)) folds into the KH type-2 domain.

The protein belongs to the TRAFAC class TrmE-Era-EngA-EngB-Septin-like GTPase superfamily. Era GTPase family. As to quaternary structure, monomer.

The protein resides in the cytoplasm. It is found in the cell inner membrane. Functionally, an essential GTPase that binds both GDP and GTP, with rapid nucleotide exchange. Plays a role in 16S rRNA processing and 30S ribosomal subunit biogenesis and possibly also in cell cycle regulation and energy metabolism. This is GTPase Era from Actinobacillus pleuropneumoniae serotype 5b (strain L20).